A 294-amino-acid chain; its full sequence is MATHGQTCARPMCIPPSYADLGKAARDIFNKGFGFGLVKLDVKTKSCSGVEFSTSGSSNTDTGKVTGTLETKYKWCEYGLTFTEKWNTDNTLGTEIAIEDQICQGLKLTFDTTFSPNTGKKSGKIKSSYKRECINLGCDVDFDFAGPAIHGSAVFGYEGWLAGYQMTFDSAKSKLTRNNFAVGYRTGDFQLHTNVNDGTEFGGSIYQKVCEDLDTSVNLAWTSGTNCTRFGIAAKYQLDPTASISAKVNNSSLIGVGYTQTLRPGVKLTLSALVDGKSINAGGHKVGLALELEA.

An N-acetylalanine modification is found at Ala2. Residues Lys23 and Lys31 each coordinate ATP. Lys31 bears the N6-acetyllysine; alternate mark. At Lys31 the chain carries N6-succinyllysine; alternate. Lys31 participates in a covalent cross-link: Glycyl lysine isopeptide (Lys-Gly) (interchain with G-Cter in ubiquitin); alternate. 2 consecutive transmembrane segments (beta stranded) span residues 37-46 (LVKLDVKTKS) and 50-58 (VEFSTSGSS). Residues Lys64 and Lys72 each participate in a glycyl lysine isopeptide (Lys-Gly) (interchain with G-Cter in ubiquitin) cross-link. The chain crosses the membrane as a beta stranded span at residues 65-75 (VTGTLETKYKW). The residue at position 78 (Tyr78) is a Phosphotyrosine. 3 beta stranded membrane-spanning segments follow: residues 80 to 87 (LTFTEKWN), 91 to 100 (TLGTEIAIED), and 106 to 115 (LKLTFDTTFS). Thr118 carries the post-translational modification Phosphothreonine. Lys120 carries the N6-acetyllysine; alternate modification. Lys120 is covalently cross-linked (Glycyl lysine isopeptide (Lys-Gly) (interchain with G-Cter in ubiquitin); alternate). Residues Lys121 and Lys124 each participate in a glycyl lysine isopeptide (Lys-Gly) (interchain with G-Cter in ubiquitin) cross-link. The next 4 beta stranded transmembrane spans lie at 122–131 (SGKIKSSYKR), 134–141 (INLGCDVD), 148–156 (AIHGSAVFG), and 161–169 (LAGYQMTFD). Residue Lys172 forms a Glycyl lysine isopeptide (Lys-Gly) (interchain with G-Cter in ubiquitin) linkage. Beta stranded transmembrane passes span 174-186 (KLTR…GYRT), 189-196 (FQLHTNVN), 200-209 (EFGGSIYQKV), 213-222 (LDTSVNLAWT), 229-238 (RFGIAAKYQL), and 242-249 (ASISAKVN). Ser251 is subject to Phosphoserine. NAD(+) contacts are provided by residues 253 to 255 (LIG) and 271 to 275 (SALVD). 2 consecutive transmembrane segments (beta stranded) span residues 253–262 (LIGVGYTQTL) and 265–274 (GVKLTLSALV). At Lys277 the chain carries N6-acetyllysine; alternate. Lys277 is covalently cross-linked (Glycyl lysine isopeptide (Lys-Gly) (interchain with G-Cter in ubiquitin); alternate). The chain crosses the membrane as a beta stranded span at residues 284 to 293 (HKVGLALELE). Residue Lys285 forms a Glycyl lysine isopeptide (Lys-Gly) (interchain with G-Cter in ubiquitin) linkage.

It belongs to the eukaryotic mitochondrial porin family. As to quaternary structure, monomer, homodimer and higher order oligomers; formation of higher order structures is necessary for scramblase activity. Interacts with ARMC12 in a TBC1D21-dependent manner. Interacts with KLC3. Interacts with SPATA33. Interacts with PPP3CC in a SPATA33-dependent manner. In terms of processing, ubiquitinated by PRKN during mitophagy, leading to its degradation and enhancement of mitophagy. Deubiquitinated by USP30. In terms of tissue distribution, expressed in erythrocytes (at protein level). Expressed in all tissues examined.

It localises to the mitochondrion outer membrane. The protein resides in the membrane. It carries out the reaction chloride(in) = chloride(out). The enzyme catalyses K(+)(in) = K(+)(out). The catalysed reaction is a 1,2-diacyl-sn-glycero-3-phospho-L-serine(in) = a 1,2-diacyl-sn-glycero-3-phospho-L-serine(out). It catalyses the reaction a 1,2-diacyl-sn-glycero-3-phosphocholine(in) = a 1,2-diacyl-sn-glycero-3-phosphocholine(out). It carries out the reaction a 1,2-diacyl-sn-glycero-3-phospho-(1D-myo-inositol)(in) = a 1,2-diacyl-sn-glycero-3-phospho-(1D-myo-inositol)(out). Its function is as follows. Non-selective voltage-gated ion channel that mediates the transport of anions and cations through the mitochondrion outer membrane and plasma membrane. The channel adopts an open conformation at zero mV and a closed conformation at both positive and negative potentials. There are two populations of channels; the main that functions in a lower open-state conductance with lower ion selectivity, that switch, in a voltage-dependent manner, from the open to a low-conducting 'closed' state and the other that has a normal ion selectivity in the typical high conductance, 'open' state. Binds various lipids, including the sphingolipid ceramide, the phospholipid phosphatidylcholine, and the sterols cholesterol and oxysterol. Binding of ceramide promotes the mitochondrial outer membrane permeabilization (MOMP) apoptotic pathway. Functionally, catalyzes the scrambling of phospholipids across the outer mitochondrial membrane; the mechanism is unrelated to channel activity and is capable of translocating both anionic and zwitterionic phospholipids. This Homo sapiens (Human) protein is Non-selective voltage-gated ion channel VDAC2.